A 233-amino-acid polypeptide reads, in one-letter code: Hydroxyacylglutathione hydrolase (233 aa).

Zn(2+) contacts are provided by histidine 52, histidine 54, aspartate 56, histidine 57, histidine 108, aspartate 125, and histidine 163.

It belongs to the metallo-beta-lactamase superfamily. Glyoxalase II family. In terms of assembly, monomer. Requires Zn(2+) as cofactor.

It carries out the reaction an S-(2-hydroxyacyl)glutathione + H2O = a 2-hydroxy carboxylate + glutathione + H(+). Its pathway is secondary metabolite metabolism; methylglyoxal degradation; (R)-lactate from methylglyoxal: step 2/2. Thiolesterase that catalyzes the hydrolysis of S-D-lactoyl-glutathione to form glutathione and D-lactic acid. The sequence is that of Hydroxyacylglutathione hydrolase from Histophilus somni (strain 2336) (Haemophilus somnus).